The following is a 149-amino-acid chain: D-aminoacyl-tRNA deacylase (149 aa).

A Gly-cisPro motif, important for rejection of L-amino acids motif is present at residues 137 to 138; that stretch reads GP.

The protein belongs to the DTD family. In terms of assembly, homodimer.

The protein localises to the cytoplasm. The enzyme catalyses glycyl-tRNA(Ala) + H2O = tRNA(Ala) + glycine + H(+). It catalyses the reaction a D-aminoacyl-tRNA + H2O = a tRNA + a D-alpha-amino acid + H(+). Its function is as follows. An aminoacyl-tRNA editing enzyme that deacylates mischarged D-aminoacyl-tRNAs. Also deacylates mischarged glycyl-tRNA(Ala), protecting cells against glycine mischarging by AlaRS. Acts via tRNA-based rather than protein-based catalysis; rejects L-amino acids rather than detecting D-amino acids in the active site. By recycling D-aminoacyl-tRNA to D-amino acids and free tRNA molecules, this enzyme counteracts the toxicity associated with the formation of D-aminoacyl-tRNA entities in vivo and helps enforce protein L-homochirality. In Leuconostoc mesenteroides subsp. mesenteroides (strain ATCC 8293 / DSM 20343 / BCRC 11652 / CCM 1803 / JCM 6124 / NCDO 523 / NBRC 100496 / NCIMB 8023 / NCTC 12954 / NRRL B-1118 / 37Y), this protein is D-aminoacyl-tRNA deacylase.